The chain runs to 120 residues: UPF0231 protein YacL (120 aa).

It belongs to the UPF0231 family.

This is UPF0231 protein YacL from Escherichia coli O139:H28 (strain E24377A / ETEC).